A 251-amino-acid polypeptide reads, in one-letter code: MAKKEHVELVPIFDDNYVFILTDDATQKAVAVDPGDAGPVIDFLRANKLDLAAILLTHHHSDHIGGVGELKAAFDCPVYAPQKNQKQIPVADQWLKEGDSVTCGPWDFTVMELPGHTLGHIAYWNQKHKWLFSGDVIFGLGCGRLFEGTFEQGYESLQRIKKLPPQTLIYCTHEYTKSNLEFCRILTNQDNTPITGDSEALELYANELSNRRELNLPSVPLKLSIEESVNPFLLARDVEQFRYLRELRNRQ.

Zn(2+) contacts are provided by H58, H60, D62, H63, H116, D135, and H173.

The protein belongs to the metallo-beta-lactamase superfamily. Glyoxalase II family. Monomer. Zn(2+) serves as cofactor.

It catalyses the reaction an S-(2-hydroxyacyl)glutathione + H2O = a 2-hydroxy carboxylate + glutathione + H(+). Its pathway is secondary metabolite metabolism; methylglyoxal degradation; (R)-lactate from methylglyoxal: step 2/2. Functionally, thiolesterase that catalyzes the hydrolysis of S-D-lactoyl-glutathione to form glutathione and D-lactic acid. This is Hydroxyacylglutathione hydrolase from Bdellovibrio bacteriovorus (strain ATCC 15356 / DSM 50701 / NCIMB 9529 / HD100).